Consider the following 173-residue polypeptide: Large ribosomal subunit protein uL22c (173 aa).

Belongs to the universal ribosomal protein uL22 family. As to quaternary structure, part of the 50S ribosomal subunit.

The protein localises to the plastid. Its subcellular location is the chloroplast. Functionally, this protein binds specifically to 23S rRNA. The globular domain of the protein is located near the polypeptide exit tunnel on the outside of the subunit, while an extended beta-hairpin is found that lines the wall of the exit tunnel in the center of the 70S ribosome. This Drimys granadensis protein is Large ribosomal subunit protein uL22c (rpl22).